The primary structure comprises 751 residues: Serine/threonine-protein kinase-like protein CCR4 (751 aa).

An N-terminal signal peptide occupies residues 1–31; sequence MALTISISCFSSYFVSLLLLVLSSFSFVCFS. Residues 32–366 lie on the Extracellular side of the membrane; sequence LSTVSISHIS…NKTWSRRNIA (335 aa). 7 N-linked (GlcNAc...) asparagine glycosylation sites follow: N42, N51, N98, N243, N254, N283, and N357. A helical membrane pass occupies residues 367–387; the sequence is FLVVGCVGTFSLLLVISFLIF. Topologically, residues 388 to 751 are cytoplasmic; it reads KSHCRCRVHD…TETVSRSNTY (364 aa). Residues 443-733 enclose the Protein kinase domain; the sequence is FSVRFHLGIG…EVVSKLESAL (291 aa). ATP is bound by residues 449–457 and K471; that span reads LGIGSFGSV. D579 functions as the Proton acceptor in the catalytic mechanism.

This sequence belongs to the protein kinase superfamily. Ser/Thr protein kinase family. Homodimer. Expressed in roots, leaves, especially in trichomes, shoot apical meristems (SAM), and, to a lower extent, in floral buds.

It is found in the membrane. The enzyme catalyses L-seryl-[protein] + ATP = O-phospho-L-seryl-[protein] + ADP + H(+). It catalyses the reaction L-threonyl-[protein] + ATP = O-phospho-L-threonyl-[protein] + ADP + H(+). In Arabidopsis thaliana (Mouse-ear cress), this protein is Serine/threonine-protein kinase-like protein CCR4 (CCR4).